Consider the following 302-residue polypeptide: Sulfate adenylyltransferase subunit 2 (302 aa).

It belongs to the PAPS reductase family. CysD subfamily. Heterodimer composed of CysD, the smaller subunit, and CysN.

The enzyme catalyses sulfate + ATP + H(+) = adenosine 5'-phosphosulfate + diphosphate. It participates in sulfur metabolism; hydrogen sulfide biosynthesis; sulfite from sulfate: step 1/3. Its function is as follows. With CysN forms the ATP sulfurylase (ATPS) that catalyzes the adenylation of sulfate producing adenosine 5'-phosphosulfate (APS) and diphosphate, the first enzymatic step in sulfur assimilation pathway. APS synthesis involves the formation of a high-energy phosphoric-sulfuric acid anhydride bond driven by GTP hydrolysis by CysN coupled to ATP hydrolysis by CysD. The sequence is that of Sulfate adenylyltransferase subunit 2 from Baumannia cicadellinicola subsp. Homalodisca coagulata.